A 224-amino-acid polypeptide reads, in one-letter code: Peptidyl-prolyl cis-trans isomerase FKBP3 (224 aa).

Ala-2 carries the N-acetylalanine modification. Ser-36 is subject to Phosphoserine. The interval 87–119 (NVKLNEDKPKETKSEETPDEGPPKYTKSVLKKG) is disordered. The span at 89-102 (KLNEDKPKETKSEE) shows a compositional bias: basic and acidic residues. Lys-99 is modified (N6-acetyllysine). The PPIase FKBP-type domain occupies 128–224 (GDVVHCWYTG…IFEVELVDID (97 aa)). Ser-152 bears the Phosphoserine mark. Residue Lys-170 is modified to N6-acetyllysine.

It belongs to the FKBP-type PPIase family.

Its subcellular location is the nucleus. It carries out the reaction [protein]-peptidylproline (omega=180) = [protein]-peptidylproline (omega=0). Inhibited preferentially by rapamycin over FK506. Functionally, FK506- and rapamycin-binding proteins (FKBPs) constitute a family of receptors for the two immunosuppressants which inhibit T-cell proliferation by arresting two distinct cytoplasmic signal transmission pathways. PPIases accelerate the folding of proteins. In Oryctolagus cuniculus (Rabbit), this protein is Peptidyl-prolyl cis-trans isomerase FKBP3 (FKBP3).